Here is a 727-residue protein sequence, read N- to C-terminus: Phosphoribosylformylglycinamidine synthase subunit PurL (727 aa).

The active site involves His-47. Positions 50 and 82 each coordinate ATP. Position 84 (Glu-84) interacts with Mg(2+). Substrate is bound by residues 85 to 88 (SHNH) and Arg-107. His-86 functions as the Proton acceptor in the catalytic mechanism. Mg(2+) is bound at residue Asp-108. Gln-229 is a substrate binding site. Asp-257 is a binding site for Mg(2+). 301 to 303 (ESQ) contacts substrate. Residues Asp-486 and Gly-523 each coordinate ATP. Asn-524 is a Mg(2+) binding site. Ser-526 is a binding site for substrate.

Belongs to the FGAMS family. In terms of assembly, monomer. Part of the FGAM synthase complex composed of 1 PurL, 1 PurQ and 2 PurS subunits.

It is found in the cytoplasm. The enzyme catalyses N(2)-formyl-N(1)-(5-phospho-beta-D-ribosyl)glycinamide + L-glutamine + ATP + H2O = 2-formamido-N(1)-(5-O-phospho-beta-D-ribosyl)acetamidine + L-glutamate + ADP + phosphate + H(+). It participates in purine metabolism; IMP biosynthesis via de novo pathway; 5-amino-1-(5-phospho-D-ribosyl)imidazole from N(2)-formyl-N(1)-(5-phospho-D-ribosyl)glycinamide: step 1/2. Its function is as follows. Part of the phosphoribosylformylglycinamidine synthase complex involved in the purines biosynthetic pathway. Catalyzes the ATP-dependent conversion of formylglycinamide ribonucleotide (FGAR) and glutamine to yield formylglycinamidine ribonucleotide (FGAM) and glutamate. The FGAM synthase complex is composed of three subunits. PurQ produces an ammonia molecule by converting glutamine to glutamate. PurL transfers the ammonia molecule to FGAR to form FGAM in an ATP-dependent manner. PurS interacts with PurQ and PurL and is thought to assist in the transfer of the ammonia molecule from PurQ to PurL. The protein is Phosphoribosylformylglycinamidine synthase subunit PurL of Petrotoga mobilis (strain DSM 10674 / SJ95).